The following is a 638-amino-acid chain: Phosphomethylpyrimidine synthase (638 aa).

Residues asparagine 235, methionine 264, tyrosine 293, histidine 329, 349–351, 390–393, and glutamate 429 each bind substrate; these read SRG and DGLR. Histidine 433 contacts Zn(2+). Position 456 (tyrosine 456) interacts with substrate. Zn(2+) is bound at residue histidine 497. Cysteine 577, cysteine 580, and cysteine 585 together coordinate [4Fe-4S] cluster.

The protein belongs to the ThiC family. As to quaternary structure, homodimer. It depends on [4Fe-4S] cluster as a cofactor.

It carries out the reaction 5-amino-1-(5-phospho-beta-D-ribosyl)imidazole + S-adenosyl-L-methionine = 4-amino-2-methyl-5-(phosphooxymethyl)pyrimidine + CO + 5'-deoxyadenosine + formate + L-methionine + 3 H(+). The protein operates within cofactor biosynthesis; thiamine diphosphate biosynthesis. Functionally, catalyzes the synthesis of the hydroxymethylpyrimidine phosphate (HMP-P) moiety of thiamine from aminoimidazole ribotide (AIR) in a radical S-adenosyl-L-methionine (SAM)-dependent reaction. This is Phosphomethylpyrimidine synthase from Polaromonas naphthalenivorans (strain CJ2).